Consider the following 108-residue polypeptide: Thiosulfate sulfurtransferase GlpE (108 aa).

The 89-residue stretch at 18 to 106 folds into the Rhodanese domain; that stretch reads ENEGATLADI…WERSGLPIET (89 aa). Cysteine 66 functions as the Cysteine persulfide intermediate in the catalytic mechanism.

The protein belongs to the GlpE family.

The protein resides in the cytoplasm. The catalysed reaction is thiosulfate + hydrogen cyanide = thiocyanate + sulfite + 2 H(+). The enzyme catalyses thiosulfate + [thioredoxin]-dithiol = [thioredoxin]-disulfide + hydrogen sulfide + sulfite + 2 H(+). Its function is as follows. Transferase that catalyzes the transfer of sulfur from thiosulfate to thiophilic acceptors such as cyanide or dithiols. May function in a CysM-independent thiosulfate assimilation pathway by catalyzing the conversion of thiosulfate to sulfite, which can then be used for L-cysteine biosynthesis. The protein is Thiosulfate sulfurtransferase GlpE of Actinobacillus pleuropneumoniae serotype 7 (strain AP76).